The primary structure comprises 176 residues: NAD(P)H-quinone oxidoreductase subunit 6, chloroplastic (176 aa).

A run of 5 helical transmembrane segments spans residues F10–T30, T32–L52, L63–G83, V92–I112, and F152–F172.

It belongs to the complex I subunit 6 family. In terms of assembly, NDH is composed of at least 16 different subunits, 5 of which are encoded in the nucleus.

It is found in the plastid. The protein localises to the chloroplast thylakoid membrane. The enzyme catalyses a plastoquinone + NADH + (n+1) H(+)(in) = a plastoquinol + NAD(+) + n H(+)(out). It catalyses the reaction a plastoquinone + NADPH + (n+1) H(+)(in) = a plastoquinol + NADP(+) + n H(+)(out). Functionally, NDH shuttles electrons from NAD(P)H:plastoquinone, via FMN and iron-sulfur (Fe-S) centers, to quinones in the photosynthetic chain and possibly in a chloroplast respiratory chain. The immediate electron acceptor for the enzyme in this species is believed to be plastoquinone. Couples the redox reaction to proton translocation, and thus conserves the redox energy in a proton gradient. The sequence is that of NAD(P)H-quinone oxidoreductase subunit 6, chloroplastic (ndhG) from Phaseolus vulgaris (Kidney bean).